The sequence spans 1030 residues: ATPase MORC2A (1030 aa).

Residue Ala2 is modified to N-acetylalanine. Residues Asn39, 87-89 (SAK), and 99-105 (QYGNGLK) each bind ATP. Asn39 lines the Mg(2+) pocket. The stretch at 285-362 (KTRAEQEVKK…KDAKQRALKE (78 aa)) forms a coiled coil. Position 427 (Lys427) interacts with ATP. The CW-type zinc finger occupies 490-544 (AMEIPTTIQCDLCLKWRTLPFQLSSVETDYPDTWVCSMNPDPEQDRCEASEQKQK). Residues Cys499, Cys502, Cys525, and Cys536 each contribute to the Zn(2+) site. Residues 530–791 (DPEQDRCEAS…HPAELRKAQK (262 aa)) form a disordered region. Composition is skewed to basic and acidic residues over residues 532–543 (EQDRCEASEQKQ) and 550–577 (LKKDPKTQEEKQKQLTEKIRQQQEKLEA). Residues 555–583 (KTQEEKQKQLTEKIRQQQEKLEALQKTTP) adopt a coiled-coil conformation. At Thr582 the chain carries Phosphothreonine. Ser614 bears the Phosphoserine mark. Residues 629-646 (PSIQTPRPSTQLRKTSVI) show a composition bias toward polar residues. Residues Lys650 and Lys702 each participate in a glycyl lysine isopeptide (Lys-Gly) (interchain with G-Cter in SUMO2) cross-link. A compositionally biased stretch (low complexity) spans 693-702 (PPLSLIPSSK). Phosphoserine is present on Ser703. Lys714 participates in a covalent cross-link: Glycyl lysine isopeptide (Lys-Gly) (interchain with G-Cter in SUMO2). Ser728 is subject to Phosphoserine. Thr731 bears the Phosphothreonine mark. A phosphoserine mark is found at Ser737 and Ser741. The stretch at 738 to 775 (LAVSDEEEAEEEAEKRRERCKRGKLAVKEEKKEANELS) forms a coiled coil. Residues 763–772 (AVKEEKKEAN) show a composition bias toward basic and acidic residues. Residue Lys765 forms a Glycyl lysine isopeptide (Lys-Gly) (interchain with G-Cter in SUMO2) linkage. Phosphoserine occurs at positions 775 and 777. The segment covering 779–791 (GEDHPAELRKAQK) has biased composition (basic and acidic residues). A Glycyl lysine isopeptide (Lys-Gly) (interchain with G-Cter in SUMO2) cross-link involves residue Lys817. A Phosphothreonine modification is found at Thr834. Residues 837–849 (DRWVEKGSEDVRL) are compositionally biased toward basic and acidic residues. 2 disordered regions span residues 837–874 (DRWVEKGSEDVRLMKPPSPEHQSPDTQQEGGEEEEAMV) and 882–901 (PEPSTSDGLPIEPDTTATSP). Residues Ser854 and Ser859 each carry the phosphoserine modification. Residues 856–865 (EHQSPDTQQE) are compositionally biased toward polar residues. A Glycyl lysine isopeptide (Lys-Gly) (interchain with G-Cter in SUMO2) cross-link involves residue Lys930. Residues 966–1011 (RADSRAKASEESLRTSEKKLRETEEKLQKLRTNIVALLQKVQEDID) are a coiled coil.

Homodimerizes upon ATP-binding and dissociate upon ATP hydrolysis; homodimerization is required for gene silencing. Binds histone H3 independently of the methylation status at 'Lys-9'. Interacts with HDAC4. Interacts with FAM208A/TASOR and MPHOSPH8; the interactions associate MORC2 with the HUSH complex which recruits MORC2 to heterochromatic loci. Interacts with Morc2b. Post-translationally, phosphorylated by PAK1 at Ser-737 upon DNA damage. Phosphorylation is required for ATPase activity and recruitment to damaged chromatin. Expressed in the axons and Schwann cells of peripheral nerves. Expressed in testes.

Its subcellular location is the nucleus. It localises to the cytoplasm. It is found in the cytosol. The protein localises to the chromosome. The protein resides in the nucleus matrix. It carries out the reaction ATP + H2O = ADP + phosphate + H(+). Its activity is regulated as follows. ATPase activity is dependent of phosphorylation by PAK1 and presence of DNA. Essential for epigenetic silencing by the HUSH complex. Recruited by HUSH to target site in heterochromatin, the ATPase activity and homodimerization are critical for HUSH-mediated silencing. Represses germ cell-related genes and L1 retrotransposons in collaboration with SETDB1 and the HUSH complex, the silencing is dependent of repressive epigenetic modifications, such as H3K9me3 mark. Silencing events often occur within introns of transcriptionally active genes, and lead to the down-regulation of host gene expression. During DNA damage response, regulates chromatin remodeling through ATP hydrolysis. During DNA damage response, may regulate chromatin remodeling through ATP hydrolysis. The sequence is that of ATPase MORC2A from Mus musculus (Mouse).